The sequence spans 102 residues: uncharacterized protein (102 aa).

This is an uncharacterized protein from Haemophilus influenzae (strain ATCC 51907 / DSM 11121 / KW20 / Rd).